A 294-amino-acid chain; its full sequence is UDP-3-O-acyl-N-acetylglucosamine deacetylase (294 aa).

Residues His-75, His-232, and Asp-236 each contribute to the Zn(2+) site. The Proton donor role is filled by His-259.

This sequence belongs to the LpxC family. It depends on Zn(2+) as a cofactor.

The enzyme catalyses a UDP-3-O-[(3R)-3-hydroxyacyl]-N-acetyl-alpha-D-glucosamine + H2O = a UDP-3-O-[(3R)-3-hydroxyacyl]-alpha-D-glucosamine + acetate. It functions in the pathway glycolipid biosynthesis; lipid IV(A) biosynthesis; lipid IV(A) from (3R)-3-hydroxytetradecanoyl-[acyl-carrier-protein] and UDP-N-acetyl-alpha-D-glucosamine: step 2/6. Its function is as follows. Catalyzes the hydrolysis of UDP-3-O-myristoyl-N-acetylglucosamine to form UDP-3-O-myristoylglucosamine and acetate, the committed step in lipid A biosynthesis. In Campylobacter jejuni (strain RM1221), this protein is UDP-3-O-acyl-N-acetylglucosamine deacetylase.